The primary structure comprises 528 residues: ATP synthase subunit beta 2 (528 aa).

Over residues 1–10 (MADPQATNGT) the composition is skewed to polar residues. The interval 1 to 27 (MADPQATNGTGAACAERDASDVGDARD) is disordered. The span at 15-27 (AERDASDVGDARD) shows a compositional bias: basic and acidic residues. 179–186 (GGAGVGKT) contacts ATP. Over residues 488–499 (AAAREADARREA) the composition is skewed to basic and acidic residues. The disordered stretch occupies residues 488-528 (AAAREADARREAAAAASGAGPGTTSDPASGSAEPQGARHGR).

This sequence belongs to the ATPase alpha/beta chains family. In terms of assembly, F-type ATPases have 2 components, CF(1) - the catalytic core - and CF(0) - the membrane proton channel. CF(1) has five subunits: alpha(3), beta(3), gamma(1), delta(1), epsilon(1). CF(0) has three main subunits: a(1), b(2) and c(9-12). The alpha and beta chains form an alternating ring which encloses part of the gamma chain. CF(1) is attached to CF(0) by a central stalk formed by the gamma and epsilon chains, while a peripheral stalk is formed by the delta and b chains.

The protein localises to the cell inner membrane. It carries out the reaction ATP + H2O + 4 H(+)(in) = ADP + phosphate + 5 H(+)(out). Produces ATP from ADP in the presence of a proton gradient across the membrane. The catalytic sites are hosted primarily by the beta subunits. In Burkholderia pseudomallei (strain 1106a), this protein is ATP synthase subunit beta 2.